The sequence spans 274 residues: Penicillin-insensitive murein endopeptidase (274 aa).

Positions 1 to 19 (MKKTVIALLAWFVSSASLA) are cleaved as a signal peptide. Cystine bridges form between Cys44–Cys265, Cys187–Cys235, and Cys216–Cys223. His110, His113, Asp120, Asp147, His150, and His211 together coordinate Zn(2+). The tract at residues 225 to 274 (DQPLPPPGDGCGAELQSWFEPPKPGTTKPEKKTPPPLPPSCQALLDEHVL) is disordered.

It belongs to the peptidase M74 family. Dimer. The cofactor is Zn(2+).

It is found in the periplasm. Functionally, murein endopeptidase that cleaves the D-alanyl-meso-2,6-diamino-pimelyl amide bond that connects peptidoglycan strands. Likely plays a role in the removal of murein from the sacculus. This is Penicillin-insensitive murein endopeptidase from Salmonella paratyphi C (strain RKS4594).